The chain runs to 95 residues: Co-chaperonin GroES (95 aa).

Belongs to the GroES chaperonin family. In terms of assembly, heptamer of 7 subunits arranged in a ring. Interacts with the chaperonin GroEL.

It is found in the cytoplasm. Functionally, together with the chaperonin GroEL, plays an essential role in assisting protein folding. The GroEL-GroES system forms a nano-cage that allows encapsulation of the non-native substrate proteins and provides a physical environment optimized to promote and accelerate protein folding. GroES binds to the apical surface of the GroEL ring, thereby capping the opening of the GroEL channel. This is Co-chaperonin GroES from Desulfotalea psychrophila (strain LSv54 / DSM 12343).